Reading from the N-terminus, the 645-residue chain is Meiosis induction protein kinase IME2/SME1 (645 aa).

The segment at 1–24 is disordered; sequence MVEKRSRQSSSSGSEFSVPPDVDN. Residues 8–17 show a composition bias toward low complexity; that stretch reads QSSSSGSEFS. Residues 38–386 form the Protein kinase domain; that stretch reads YQLIEKLGAG…AQELCEMPFF (349 aa). ATP contacts are provided by residues 44–52 and lysine 67; that span reads LGAGSFGCV. The active-site Proton acceptor is aspartate 193.

It belongs to the protein kinase superfamily. Ser/Thr protein kinase family.

The enzyme catalyses L-seryl-[protein] + ATP = O-phospho-L-seryl-[protein] + ADP + H(+). The catalysed reaction is L-threonyl-[protein] + ATP = O-phospho-L-threonyl-[protein] + ADP + H(+). In terms of biological role, protein kinase which is essential for the initiation of meiosis and sporulation. This Saccharomyces cerevisiae (strain ATCC 204508 / S288c) (Baker's yeast) protein is Meiosis induction protein kinase IME2/SME1 (IME2).